The primary structure comprises 274 residues: Rhamnulose-1-phosphate aldolase (274 aa).

Glu117 is an active-site residue. Residues His141, His143, and His212 each contribute to the Zn(2+) site.

Belongs to the aldolase class II family. RhaD subfamily. As to quaternary structure, homotetramer. Requires Zn(2+) as cofactor.

It is found in the cytoplasm. It catalyses the reaction L-rhamnulose 1-phosphate = (S)-lactaldehyde + dihydroxyacetone phosphate. It participates in carbohydrate degradation; L-rhamnose degradation; glycerone phosphate from L-rhamnose: step 3/3. In terms of biological role, catalyzes the reversible cleavage of L-rhamnulose-1-phosphate to dihydroxyacetone phosphate (DHAP) and L-lactaldehyde. This chain is Rhamnulose-1-phosphate aldolase, found in Shigella boydii serotype 4 (strain Sb227).